Consider the following 194-residue polypeptide: Protein GrpE (194 aa).

The interval 1 to 53 (MVENEKTSVEETEEKAETEDEMLTEDPSNEDSDEANEEGNELSEEEKRIAELE) is disordered. The span at 10 to 44 (EETEEKAETEDEMLTEDPSNEDSDEANEEGNELSE) shows a compositional bias: acidic residues.

Belongs to the GrpE family. As to quaternary structure, homodimer.

It is found in the cytoplasm. In terms of biological role, participates actively in the response to hyperosmotic and heat shock by preventing the aggregation of stress-denatured proteins, in association with DnaK and GrpE. It is the nucleotide exchange factor for DnaK and may function as a thermosensor. Unfolded proteins bind initially to DnaJ; upon interaction with the DnaJ-bound protein, DnaK hydrolyzes its bound ATP, resulting in the formation of a stable complex. GrpE releases ADP from DnaK; ATP binding to DnaK triggers the release of the substrate protein, thus completing the reaction cycle. Several rounds of ATP-dependent interactions between DnaJ, DnaK and GrpE are required for fully efficient folding. The protein is Protein GrpE of Halalkalibacterium halodurans (strain ATCC BAA-125 / DSM 18197 / FERM 7344 / JCM 9153 / C-125) (Bacillus halodurans).